Reading from the N-terminus, the 535-residue chain is MSMKLRDILPAPVAADEAASQIRRDPWFGGRDNEPSAALVSKEPPPYGKRTSFRPRGPEDFGDGGAFPEIHVAQFPLGLGLGDMRGKPENTLALQYGTDGKLQHDAIARIGHVKDKVVYSKLNDMKAKTWNEDDDDIQKPDDDAVIDATEKTRMALEKIVNSKVASALPVRHADKLAPAQYIRYTPSQQNGAAGSQQRIIRMVEEQKDPMEPPKFKINQKIPRAPPSPPAPVMHSPPRKMTAKDQNDWKIPPCISNWKNPKGFTVGLDKRLAADGRGLQQTHINENFAKLADALYIADRKAREEVETRAQLERRVAQNKKSEQEAKMAEAAAKARQERSAMRRKDDEDDEQVKVREEIRRDRLDDIRKERNIARSRPDKADKLRKERERDISEKIVLGLPDTNQKRTGEPQFDQRLFDKTQGLDSGAMDDDTYNPYDAAWRGGDSVQQHVYRPSKNLDNDVYGGDLDKIIEQKNRFVADKGFSGAEGSSRGSGPVQFEKDQDVFGLSSLFEHTKEKKRGGDGGDSRGESKRSRRD.

Disordered regions lie at residues 1–58 (MSMK…PRGP), 211–254 (EPPK…PPCI), 313–353 (RRVA…EQVK), 376–416 (RPDK…DQRL), 421–440 (QGLD…DAAW), and 508–535 (SLFE…SRRD). The segment covering 22 to 34 (IRRDPWFGGRDNE) has biased composition (basic and acidic residues). The SNW stretch occupies residues 179–342 (AQYIRYTPSQ…KARQERSAMR (164 aa)). The segment covering 376 to 393 (RPDKADKLRKERERDISE) has biased composition (basic and acidic residues). Over residues 511–535 (EHTKEKKRGGDGGDSRGESKRSRRD) the composition is skewed to basic and acidic residues.

It belongs to the SNW family.

This is an uncharacterized protein from Caenorhabditis elegans.